A 219-amino-acid chain; its full sequence is AA11 family lytic polysaccharide monooxygenase A (219 aa).

An N-terminal signal peptide occupies residues 1 to 18 (MMLSKVVMGLLTASLAAA). H19 contributes to the Cu(+) binding site. 3 disulfide bridges follow: C58-C154, C94-C116, and C185-C218. N80 is a glycosylation site (N-linked (GlcNAc...) asparagine). Position 89 (H89) interacts with Cu(+).

This sequence belongs to the polysaccharide monooxygenase AA11 family. Cu(2+) serves as cofactor.

Functionally, lytic polysaccharide monooxygenase (LPMO) that depolymerizes chitin via the oxidation of scissile beta-(1-4)-glycosidic bonds, yielding C1 or C4 oxidation products. Catalysis by LPMOs requires the reduction of the active-site copper from Cu(II) to Cu(I) by a reducing agent and H(2)O(2) or O(2) as a cosubstrate. Has considerable affinity for alpha-chitin and, more so, beta-chitin. Active toward both alpha-chitin and beta-chitin allomorphs and enhances chitin degradation by an endoacting chitinase, in particular for alpha-chitin, and so plays a role in fungal chitin turnover. The catalytic activity increases when supplying reactions with hydrogen peroxide, confirming that it has peroxygenase activity. Does not show activity on phosphoric acid-swollen cellulose (PASC), Avicel, tamarind xyloglucan, birchwood xylan, beechwood xylan, acetyl glucuronoxylan from aspen, ivory nut mannan, acetylated konjac glucomannan, potato starch, heparin, hyaluronic acid, and chitosan. The polypeptide is AA11 family lytic polysaccharide monooxygenase A (Aspergillus fumigatus (strain CBS 144.89 / FGSC A1163 / CEA10) (Neosartorya fumigata)).